Consider the following 578-residue polypeptide: Monooxygenase cfoE (578 aa).

Residues 549-569 (IVLSGVPLVVFGSLHLVLWIF) form a helical membrane-spanning segment.

Belongs to the FMO family. The cofactor is FAD.

It localises to the membrane. It functions in the pathway secondary metabolite biosynthesis; flavonoid biosynthesis. In terms of biological role, monooxygenase; part of the gene cluster that mediates the biosynthesis of chlorflavonin, a fungal flavonoid with acetolactate synthase inhibitory activity. Within the pathway, cfoE is responsible for the chlorination of the flavonoid skeleton at position C3'. The pathway begins with the PKS-NRPS hybrid synthetase cfoA that uses benzoic acid or p-hydroxybenzoic acid as a starter unit with four rounds of chain elongation using malonyl-CoA to form the chalcone skeleton. Then, a new type of chalcone isomerase, cfoK, catalyzes the conversion of the chalcone into a flavanone by a histidine-mediated oxa-Michael addition mechanism. The desaturation of flavanone to flavone is catalyzed by a new type of flavone synthase, the flavin mononucleotide (FMN)-dependent oxidoreductase cfoJ. Monooxygenases cfoF, cfoG, and P450 cfoH are responsible for the hydroxylation of the flavonoid skeleton at sites C3, C8, and C2', respectively. Like cfoF, the dehydratase cfoI plays also a role in the hydroxylation of position C3. Methyltransferases cfoB, cfoC, and cfoD then catalyze the methylation of C7-OH, C8-OH, and C3-OH, respectively. Finally, the monooxygenase cfoE is responsible for the chlorination of flavonoid at position C3'. The protein is Monooxygenase cfoE of Aspergillus candidus.